The primary structure comprises 333 residues: Serine/threonine-protein phosphatase PP1-beta (333 aa).

The Mn(2+) site is built by Asp-63, His-65, Asp-91, and Asn-123. The active-site Proton donor is the His-124. 2 residues coordinate Mn(2+): His-172 and His-247. Residues 306-333 are disordered; the sequence is GAGGVGSNRPVTPPRNAPAAQPKKGAKK. A compositionally biased stretch (low complexity) spans 322-333; that stretch reads APAAQPKKGAKK.

The protein belongs to the PPP phosphatase family. PP-1 subfamily. In terms of assembly, interacts with lab-1; the interaction is direct. Interacts with knl-1; the interaction is direct. Requires Mn(2+) as cofactor.

It localises to the cytoplasm. Its subcellular location is the nucleus. It carries out the reaction O-phospho-L-seryl-[protein] + H2O = L-seryl-[protein] + phosphate. The enzyme catalyses O-phospho-L-threonyl-[protein] + H2O = L-threonyl-[protein] + phosphate. Serine/threonine-protein phosphatase essential for chromosomal dynamics during meiosis and mitosis. Antagonizes the function of air-2 in the regulation of chromosome cohesion. Dephosphorylates histone H3 at 'Ser-10'. Also involved in the activation of chloride channel clh-3 during cell swelling and meiotic maturation. Essential for embryogenesis. The sequence is that of Serine/threonine-protein phosphatase PP1-beta (gsp-2) from Caenorhabditis briggsae.